A 406-amino-acid polypeptide reads, in one-letter code: Serine/threonine transporter SstT (406 aa).

Helical transmembrane passes span 21-41, 45-65, 79-99, 138-158, 179-199, 213-233, 285-305, 313-333, and 360-380; these read LIIGIMLALWIPDIAAPVAIL, FVGALKAVAPVLVLILVMGAI, ILILYLLGTFLAGVTAVIASF, ALMNANYIGILSWAILLGLAL, VVKWVINLAPLGILGLVFDSI, LLLLLVGCMVFVALIINPLIV, ISIPLGATINMAGAAVTIAVL, LGITVDIPTAIILSVLSAIAA, and IAMQVVGVGFIIGVVQDSCET.

It belongs to the dicarboxylate/amino acid:cation symporter (DAACS) (TC 2.A.23) family.

It is found in the cell membrane. The enzyme catalyses L-serine(in) + Na(+)(in) = L-serine(out) + Na(+)(out). The catalysed reaction is L-threonine(in) + Na(+)(in) = L-threonine(out) + Na(+)(out). Functionally, involved in the import of serine and threonine into the cell, with the concomitant import of sodium (symport system). The polypeptide is Serine/threonine transporter SstT (Desulfitobacterium hafniense (strain Y51)).